The chain runs to 271 residues: Putative phosphoenolpyruvate synthase regulatory protein (271 aa).

151-158 contacts ADP; sequence GVSRSGKT.

The protein belongs to the pyruvate, phosphate/water dikinase regulatory protein family. PSRP subfamily.

The enzyme catalyses [pyruvate, water dikinase] + ADP = [pyruvate, water dikinase]-phosphate + AMP + H(+). It catalyses the reaction [pyruvate, water dikinase]-phosphate + phosphate + H(+) = [pyruvate, water dikinase] + diphosphate. Its function is as follows. Bifunctional serine/threonine kinase and phosphorylase involved in the regulation of the phosphoenolpyruvate synthase (PEPS) by catalyzing its phosphorylation/dephosphorylation. The sequence is that of Putative phosphoenolpyruvate synthase regulatory protein from Paraburkholderia phytofirmans (strain DSM 17436 / LMG 22146 / PsJN) (Burkholderia phytofirmans).